The sequence spans 453 residues: Glutamate--tRNA ligase 2 (453 aa).

Residues 10-20 carry the 'HIGH' region motif; that stretch reads PSPTGFLHIGG. A 'KMSKS' region motif is present at residues 232 to 236; it reads KLSKR. Residue lysine 235 participates in ATP binding.

It belongs to the class-I aminoacyl-tRNA synthetase family. Glutamate--tRNA ligase type 1 subfamily. Monomer.

The protein localises to the cytoplasm. It carries out the reaction tRNA(Glu) + L-glutamate + ATP = L-glutamyl-tRNA(Glu) + AMP + diphosphate. Functionally, catalyzes the attachment of glutamate to tRNA(Glu) in a two-step reaction: glutamate is first activated by ATP to form Glu-AMP and then transferred to the acceptor end of tRNA(Glu). The polypeptide is Glutamate--tRNA ligase 2 (Wolbachia sp. subsp. Brugia malayi (strain TRS)).